A 644-amino-acid polypeptide reads, in one-letter code: Kininogen-1 (644 aa).

The signal sequence occupies residues 1–18; it reads MKLITILFLCSRLLLSLT. Gln19 carries the post-translational modification Pyrrolidone carboxylic acid; in mature form. The 105-residue stretch at 28 to 132 folds into the Cystatin kininogen-type 1 domain; it reads CNDKDLFKAV…TQTCQITPAE (105 aa). Disulfide bonds link Cys28–Cys614, Cys83–Cys94, Cys107–Cys126, Cys142–Cys145, Cys206–Cys218, Cys229–Cys248, Cys264–Cys267, Cys328–Cys340, and Cys351–Cys370. Asn48 carries N-linked (GlcNAc...) (complex) asparagine glycosylation. The segment at 120 to 153 is O-glycosylated at one site only; it reads SVATQTCQITPAEGPVVTAQYDCLGCVHPISTQS. A Cystatin kininogen-type 2 domain is found at 151 to 254; that stretch reads TQSPDLEPIL…SQNCDIYPGK (104 aa). The N-linked (GlcNAc...) asparagine glycan is linked to Asn169. N-linked (GlcNAc...) (complex) asparagine glycosylation occurs at Asn205. The Cystatin kininogen-type 3 domain occupies 273-376; sequence TNSPELEETL…TVNCQPLGMI (104 aa). A glycan (N-linked (GlcNAc...) (complex) asparagine) is linked at Asn294. Ser332 is subject to Phosphoserine; by FAM20C. Residue Pro383 is modified to 4-hydroxyproline; partial. Positions 387 to 555 are disordered; that stretch reads PFRSSRIGEI…TPIPSLAKPG (169 aa). An O-linked (GalNAc...) threonine glycan is attached at Thr401. The segment covering 418 to 434 has biased composition (basic and acidic residues); that stretch reads DSGKEQGHTRRHDWGHE. 3 repeats span residues 420–449, 450–479, and 480–510; these read GKEQGHTRRHDWGHEKQRKHNLGHGHKHER, DQGHGHQRGHGLGHGHEQQHGLGHGHKFKL, and DDDLEHQGGHVLDHGHKHKHGHGHGKHKNKG. The segment covering 435 to 446 has biased composition (basic residues); it reads KQRKHNLGHGHK. Positions 477–493 are enriched in basic and acidic residues; it reads FKLDDDLEHQGGHVLDH. Positions 494–518 are enriched in basic residues; the sequence is GHKHKHGHGHGKHKNKGKKNGKHNG. The span at 524 to 539 shows a compositional bias: polar residues; the sequence is LASSSEDSTTPSAQTQ. O-linked (GalNAc...) threonine glycans are attached at residues Thr533, Thr542, Thr546, Thr557, and Thr571. Ser577 carries O-linked (GalNAc...) serine glycosylation. Residue Thr628 is glycosylated (O-linked (GalNAc...) threonine).

Interacts (high molecular weight kininogen) (via amino acids 402-532) with triafestin-1 and triafestin-2, anticoagulant proteins from Triatoma infestans. Interacts (high molecular weight kininogen) (via amino acids 402-532) with short form salivary protein D7R1, an anticoagulant protein from Anopheles stephensi. Interacts (high molecular weight kininogen) (via amino acids 421-466 and 459-513) with haemaphysalin, an anticoagulant protein from Haemaphysalis longicornis. Bradykinin is inactivated by ACE, which removes the dipeptide Arg-Phe from its C-terminus. Post-translationally, bradykinin is released from kininogen by plasma kallikrein. In terms of processing, hydroxylation of Pro-383 occurs prior to the release of bradykinin. Phosphorylated by FAM20C in the extracellular medium. Post-translationally, N- and O-glycosylated. O-glycosylated with core 1 or possibly core 8 glycans. In terms of processing, (Microbial infection) Bradykinin is generated upon proteolytic cleavage by S.pyogenes SpeB to produce hypotension during septic shock. Secreted in plasma. T-kinin is detected in malignant ovarian, colon and breast carcinomas, but not in benign tumors.

The protein localises to the secreted. It localises to the extracellular space. In terms of biological role, kininogens are inhibitors of thiol proteases. HMW-kininogen plays an important role in blood coagulation by helping to position optimally prekallikrein and factor XI next to factor XII; HMW-kininogen inhibits the thrombin- and plasmin-induced aggregation of thrombocytes. LMW-kininogen inhibits the aggregation of thrombocytes. LMW-kininogen is in contrast to HMW-kininogen not involved in blood clotting. Functionally, the active peptide bradykinin is a potent vasodilatator that is released from HMW-kininogen shows a variety of physiological effects: (A) influence in smooth muscle contraction, (B) induction of hypotension, (C) natriuresis and diuresis, (D) decrease in blood glucose level, (E) it is a mediator of inflammation and causes (E1) increase in vascular permeability, (E2) stimulation of nociceptors (4E3) release of other mediators of inflammation (e.g. prostaglandins), (F) it has a cardioprotective effect (directly via bradykinin action, indirectly via endothelium-derived relaxing factor action). The protein is Kininogen-1 (KNG1) of Homo sapiens (Human).